We begin with the raw amino-acid sequence, 142 residues long: Nucleoside diphosphate kinase (142 aa).

Lys11, Phe59, Arg87, Thr93, Arg104, and Asn114 together coordinate ATP. Residue His117 is the Pros-phosphohistidine intermediate of the active site.

The protein belongs to the NDK family. As to quaternary structure, homotetramer. Mg(2+) is required as a cofactor.

The protein resides in the cytoplasm. It carries out the reaction a 2'-deoxyribonucleoside 5'-diphosphate + ATP = a 2'-deoxyribonucleoside 5'-triphosphate + ADP. It catalyses the reaction a ribonucleoside 5'-diphosphate + ATP = a ribonucleoside 5'-triphosphate + ADP. Functionally, major role in the synthesis of nucleoside triphosphates other than ATP. The ATP gamma phosphate is transferred to the NDP beta phosphate via a ping-pong mechanism, using a phosphorylated active-site intermediate. The protein is Nucleoside diphosphate kinase of Yersinia pseudotuberculosis serotype I (strain IP32953).